The chain runs to 802 residues: Penicillin G acylase (802 aa).

A signal peptide spans 1–26 (MKMKWLISVIILFVFIFPQNLVFAGE). Position 177 (glutamate 177) interacts with Ca(2+). A propeptide spans 235–265 (SAVIKASEKVGKERENFVQSSEELGLPLKIG) (spacer peptide). Serine 266 serves as the catalytic Nucleophile. Aspartate 341 is a Ca(2+) binding site.

Belongs to the peptidase S45 family. As to quaternary structure, heterodimer of an alpha subunit and a beta subunit processed from the same precursor. It depends on Ca(2+) as a cofactor.

It localises to the secreted. It carries out the reaction a penicillin + H2O = 6-aminopenicillanate + a carboxylate. The sequence is that of Penicillin G acylase (pac) from Rhizobium viscosum (Arthrobacter viscosus).